The primary structure comprises 185 residues: Gastrokine-1 (185 aa).

The first 20 residues, methionine 1–alanine 20, serve as a signal peptide directing secretion. One can recognise a BRICHOS domain in the interval asparagine 54–alanine 150. Cysteine 81 and cysteine 142 are oxidised to a cystine.

The protein belongs to the gastrokine family. As to expression, expressed in stomach (at protein level). No expression is detected in cancer tissue or gastric cancer cell lines.

Its subcellular location is the secreted. The protein localises to the cytoplasmic granule. The protein resides in the golgi apparatus. Its function is as follows. Has mitogenic activity and may be involved in maintaining the integrity of the gastric mucosal epithelium. In Homo sapiens (Human), this protein is Gastrokine-1 (GKN1).